An 88-amino-acid chain; its full sequence is U-scoloptoxin(01)-Tl1a (88 aa).

A signal peptide spans 1-16; that stretch reads MSVYGLLSLLIFIVLA. The Chitin-binding type-2 domain maps to 25–81; that stretch reads GKDCSEKEEYLYDSSNCDIFYECDESLKPQRMMCGPGTGWNQDKLVCDFLTNIDCTR. The cysteines at positions 58 and 71 are disulfide-linked.

The protein belongs to the scoloptoxin-01 family. In terms of processing, contains 3 disulfide bonds. As to expression, expressed by the venom gland.

The protein resides in the secreted. This Thereuopoda longicornis (Long-legged centipede) protein is U-scoloptoxin(01)-Tl1a.